Here is a 210-residue protein sequence, read N- to C-terminus: ATP-dependent Clp protease proteolytic subunit (210 aa).

Ser107 (nucleophile) is an active-site residue. His132 is an active-site residue.

It belongs to the peptidase S14 family. As to quaternary structure, fourteen ClpP subunits assemble into 2 heptameric rings which stack back to back to give a disk-like structure with a central cavity, resembling the structure of eukaryotic proteasomes.

It is found in the cytoplasm. It carries out the reaction Hydrolysis of proteins to small peptides in the presence of ATP and magnesium. alpha-casein is the usual test substrate. In the absence of ATP, only oligopeptides shorter than five residues are hydrolyzed (such as succinyl-Leu-Tyr-|-NHMec, and Leu-Tyr-Leu-|-Tyr-Trp, in which cleavage of the -Tyr-|-Leu- and -Tyr-|-Trp bonds also occurs).. In terms of biological role, cleaves peptides in various proteins in a process that requires ATP hydrolysis. Has a chymotrypsin-like activity. Plays a major role in the degradation of misfolded proteins. In Ruegeria sp. (strain TM1040) (Silicibacter sp.), this protein is ATP-dependent Clp protease proteolytic subunit.